A 233-amino-acid chain; its full sequence is MSNGGSFTVEKLSLYGNPNIGVYLTASDSYVLAPDDIGADDVRTISEVLGVAMERVVRLRVLGMRLVGVLTTGNSRGILLPEGVDREVELVRKALEGVEVGIVPTRSNALGNVIVCNDRACLASPGLEKEALKTVSDTLGVEVVEGSVAGVYTVGSAIVVTNRGGLAHPDASEEELKFLSDVFKVPFEAGTINFGVEFVRTGLVANSYGALVGEDTTGPEIARIQVALGGGVK.

Belongs to the eIF-6 family.

In terms of biological role, binds to the 50S ribosomal subunit and prevents its association with the 30S ribosomal subunit to form the 70S initiation complex. This is Translation initiation factor 6 from Aeropyrum pernix (strain ATCC 700893 / DSM 11879 / JCM 9820 / NBRC 100138 / K1).